The primary structure comprises 397 residues: Corticosteroid-binding globulin (397 aa).

The signal sequence occupies residues 1-22; it reads MSLALYTCLFWLCTSGLWTTQA. Residues Asn89, Asn169, Asn217, and Asn232 are each glycosylated (N-linked (GlcNAc...) asparagine). Residue Gln247 participates in cortisol binding. N-linked (GlcNAc...) asparagine glycosylation is present at Asn253. Asp279 serves as a coordination point for cortisol. Asn320 carries an N-linked (GlcNAc...) asparagine glycan. Trp385 contacts cortisol.

It belongs to the serpin family. Expressed by the liver; secreted in plasma.

It localises to the secreted. Functionally, major transport protein for glucocorticoids and progestins in the blood of almost all vertebrate species. This is Corticosteroid-binding globulin (Serpina6) from Mus musculus (Mouse).